We begin with the raw amino-acid sequence, 354 residues long: L-lactate dehydrogenase (354 aa).

Residues 73–78 (DAVPDK) and Arg-120 contribute to the NAD(+) site. Arg-127, Asn-159, and Arg-190 together coordinate substrate. Residue Asn-159 participates in NAD(+) binding. His-214 (proton acceptor) is an active-site residue. Substrate is bound at residue Thr-269. Residues 302–332 (HGIPDGTTSSSACPPRRPRRRPGRREMELTE) form a disordered region.

This sequence belongs to the LDH/MDH superfamily. LDH family. As to quaternary structure, homotetramer.

The enzyme catalyses (S)-lactate + NAD(+) = pyruvate + NADH + H(+). The protein operates within fermentation; pyruvate fermentation to lactate; (S)-lactate from pyruvate: step 1/1. The polypeptide is L-lactate dehydrogenase (Zea mays (Maize)).